The chain runs to 431 residues: Enolase (431 aa).

Glutamine 166 serves as a coordination point for (2R)-2-phosphoglycerate. Residue glutamate 208 is the Proton donor of the active site. Mg(2+) contacts are provided by aspartate 245, glutamate 289, and aspartate 316. Residues lysine 341, arginine 370, serine 371, and lysine 392 each contribute to the (2R)-2-phosphoglycerate site. Lysine 341 acts as the Proton acceptor in catalysis.

It belongs to the enolase family. It depends on Mg(2+) as a cofactor.

The protein resides in the cytoplasm. The protein localises to the secreted. Its subcellular location is the cell surface. It carries out the reaction (2R)-2-phosphoglycerate = phosphoenolpyruvate + H2O. The protein operates within carbohydrate degradation; glycolysis; pyruvate from D-glyceraldehyde 3-phosphate: step 4/5. Functionally, catalyzes the reversible conversion of 2-phosphoglycerate (2-PG) into phosphoenolpyruvate (PEP). It is essential for the degradation of carbohydrates via glycolysis. The polypeptide is Enolase (Ruminiclostridium cellulolyticum (strain ATCC 35319 / DSM 5812 / JCM 6584 / H10) (Clostridium cellulolyticum)).